A 137-amino-acid polypeptide reads, in one-letter code: ATP synthase epsilon chain, chloroplastic (137 aa).

The protein belongs to the ATPase epsilon chain family. As to quaternary structure, F-type ATPases have 2 components, CF(1) - the catalytic core - and CF(0) - the membrane proton channel. CF(1) has five subunits: alpha(3), beta(3), gamma(1), delta(1), epsilon(1). CF(0) has three main subunits: a, b and c.

Its subcellular location is the plastid. The protein resides in the chloroplast thylakoid membrane. Functionally, produces ATP from ADP in the presence of a proton gradient across the membrane. The sequence is that of ATP synthase epsilon chain, chloroplastic from Bigelowiella natans (Pedinomonas minutissima).